The chain runs to 478 residues: Protein nucleotidyltransferase YdiU (478 aa).

ATP is bound by residues Gly-83, Gly-85, Arg-86, Lys-106, Asp-118, Gly-119, Arg-169, and Arg-176. The Proton acceptor role is filled by Asp-245. Positions 246 and 255 each coordinate Mg(2+). Asp-255 is an ATP binding site.

Belongs to the SELO family. It depends on Mg(2+) as a cofactor. Requires Mn(2+) as cofactor.

The catalysed reaction is L-seryl-[protein] + ATP = 3-O-(5'-adenylyl)-L-seryl-[protein] + diphosphate. It catalyses the reaction L-threonyl-[protein] + ATP = 3-O-(5'-adenylyl)-L-threonyl-[protein] + diphosphate. It carries out the reaction L-tyrosyl-[protein] + ATP = O-(5'-adenylyl)-L-tyrosyl-[protein] + diphosphate. The enzyme catalyses L-histidyl-[protein] + UTP = N(tele)-(5'-uridylyl)-L-histidyl-[protein] + diphosphate. The catalysed reaction is L-seryl-[protein] + UTP = O-(5'-uridylyl)-L-seryl-[protein] + diphosphate. It catalyses the reaction L-tyrosyl-[protein] + UTP = O-(5'-uridylyl)-L-tyrosyl-[protein] + diphosphate. Nucleotidyltransferase involved in the post-translational modification of proteins. It can catalyze the addition of adenosine monophosphate (AMP) or uridine monophosphate (UMP) to a protein, resulting in modifications known as AMPylation and UMPylation. The polypeptide is Protein nucleotidyltransferase YdiU (Exiguobacterium sp. (strain ATCC BAA-1283 / AT1b)).